The sequence spans 235 residues: 2-C-methyl-D-erythritol 4-phosphate cytidylyltransferase (235 aa).

Belongs to the IspD/TarI cytidylyltransferase family. IspD subfamily.

It catalyses the reaction 2-C-methyl-D-erythritol 4-phosphate + CTP + H(+) = 4-CDP-2-C-methyl-D-erythritol + diphosphate. Its pathway is isoprenoid biosynthesis; isopentenyl diphosphate biosynthesis via DXP pathway; isopentenyl diphosphate from 1-deoxy-D-xylulose 5-phosphate: step 2/6. In terms of biological role, catalyzes the formation of 4-diphosphocytidyl-2-C-methyl-D-erythritol from CTP and 2-C-methyl-D-erythritol 4-phosphate (MEP). This Leptospira borgpetersenii serovar Hardjo-bovis (strain L550) protein is 2-C-methyl-D-erythritol 4-phosphate cytidylyltransferase.